The sequence spans 220 residues: Guanylate kinase (220 aa).

Residues 3–180 (GRLFVMTGAS…AVADFLAILT (178 aa)) form the Guanylate kinase-like domain. 10 to 17 (GASGVGKG) contacts ATP.

Belongs to the guanylate kinase family.

The protein resides in the cytoplasm. It catalyses the reaction GMP + ATP = GDP + ADP. In terms of biological role, essential for recycling GMP and indirectly, cGMP. The polypeptide is Guanylate kinase (Thermus thermophilus (strain ATCC BAA-163 / DSM 7039 / HB27)).